We begin with the raw amino-acid sequence, 973 residues long: DNA repair protein rhp26 (973 aa).

Residues glutamate 35–aspartate 107 are a coiled coil. Residues arginine 230–tryptophan 251 form a disordered region. Basic and acidic residues predominate over residues asparagine 238–tryptophan 251. The 202-residue stretch at tryptophan 289 to glycine 490 folds into the Helicase ATP-binding domain. Aspartate 302–threonine 309 is a binding site for ATP. A disordered region spans residues serine 367–lysine 386. Positions aspartate 441 to histidine 444 match the DEAH box motif. The 161-residue stretch at valine 629 to histidine 789 folds into the Helicase C-terminal domain. Disordered stretches follow at residues glutamate 803–lysine 846, lysine 863–glycine 882, and alanine 930–arginine 973. A compositionally biased stretch (basic residues) spans aspartate 834–lysine 846. Polar residues-rich tracts occupy residues glutamine 868–glycine 882 and serine 947–leucine 965.

The protein localises to the cytoplasm. The protein resides in the nucleus. Functionally, involved in transcription-coupled repair (TCR). The chain is DNA repair protein rhp26 (rhp26) from Schizosaccharomyces pombe (strain 972 / ATCC 24843) (Fission yeast).